A 125-amino-acid polypeptide reads, in one-letter code: uncharacterized protein (125 aa).

The HTH hxlR-type domain occupies 14–112 (CPVEFTLDVI…WGESNRDVLE (99 aa)).

This is an uncharacterized protein from Bacillus subtilis (strain 168).